The following is a 178-amino-acid chain: MIKWEEASVIEIPKDVKVGLSGTMLSMTFGNKKLEKKFADNYVRLLVEDNKIKIVKSKNNSRERGIVGTWASEISNMVKGLKEGFQYEMKIDYSHFPMRVSVKGKTVVIENFFGERSPRTAEIVGETQVSVKGDRLFLNGPSKKDVGETAANIERATIIKGFDPRVFQDGIYLISKGE.

It belongs to the universal ribosomal protein uL6 family. Part of the 50S ribosomal subunit.

This protein binds to the 23S rRNA, and is important in its secondary structure. It is located near the subunit interface in the base of the L7/L12 stalk, and near the tRNA binding site of the peptidyltransferase center. This is Large ribosomal subunit protein uL6 from Thermoplasma volcanium (strain ATCC 51530 / DSM 4299 / JCM 9571 / NBRC 15438 / GSS1).